An 851-amino-acid chain; its full sequence is DNA mismatch repair protein MutS (851 aa).

602–609 (GPNMSGKS) is an ATP binding site.

Belongs to the DNA mismatch repair MutS family.

This protein is involved in the repair of mismatches in DNA. It is possible that it carries out the mismatch recognition step. This protein has a weak ATPase activity. This Streptococcus pyogenes serotype M12 (strain MGAS2096) protein is DNA mismatch repair protein MutS.